Consider the following 256-residue polypeptide: Cell division protein DivIB (256 aa).

Over 1–23 the chain is Cytoplasmic; sequence MSKDLISTDEYIKIKKKRKRIKK. A helical membrane pass occupies residues 24 to 44; the sequence is IVVLFIFLISILVTLCLKIPY. Residues 45–113 form the POTRA domain; that stretch reads FNIESIEIKG…NKLQIYVKER (69 aa). Topologically, residues 45 to 256 are extracellular; that stretch reads FNIESIEIKG…EGNPVFYIEK (212 aa).

This sequence belongs to the FtsQ/DivIB family. DivIB subfamily.

Its subcellular location is the cell membrane. Functionally, cell division protein that may be involved in stabilizing or promoting the assembly of the division complex. The polypeptide is Cell division protein DivIB (Clostridium botulinum (strain Hall / ATCC 3502 / NCTC 13319 / Type A)).